A 230-amino-acid chain; its full sequence is uncharacterized protein (230 aa).

One can recognise an HTH gntR-type domain in the interval 12 to 80 (KNLSYVLAEK…PRIGTRVMPQ (69 aa)). Residues 40–59 (EIELGEQFGVSRTAVREAVK) constitute a DNA-binding region (H-T-H motif).

This is an uncharacterized protein from Escherichia coli (strain K12).